Here is a 277-residue protein sequence, read N- to C-terminus: Hydroxyethylthiazole kinase (277 aa).

Met55 is a binding site for substrate. Residues Arg130 and Ser176 each contribute to the ATP site. Gly203 lines the substrate pocket.

This sequence belongs to the Thz kinase family. Requires Mg(2+) as cofactor.

The catalysed reaction is 5-(2-hydroxyethyl)-4-methylthiazole + ATP = 4-methyl-5-(2-phosphooxyethyl)-thiazole + ADP + H(+). It participates in cofactor biosynthesis; thiamine diphosphate biosynthesis; 4-methyl-5-(2-phosphoethyl)-thiazole from 5-(2-hydroxyethyl)-4-methylthiazole: step 1/1. Catalyzes the phosphorylation of the hydroxyl group of 4-methyl-5-beta-hydroxyethylthiazole (THZ). The protein is Hydroxyethylthiazole kinase of Cutibacterium acnes (strain DSM 16379 / KPA171202) (Propionibacterium acnes).